Reading from the N-terminus, the 220-residue chain is MAAHCILFSSPAATTSLIFPISNPNTAVSLPSSSFHGVSLKSTINRQSLTLSAAASAAPKPLTVFAATKKAVAVLKGTSSVEGVVTLTQEEDGPTTVNVKITGLTPGPHGFHLHEFGDTTNGCISTGPHFNPNGNTHGAPEDENRHAGDLGNIIANADGVAEATIVDNQIPLTGPNAVVGRAFVVHELADDLGKGGHELSLSTGNAGGRLACGVVGLTPV.

A chloroplast-targeting transit peptide spans 1 to 66 (MAAHCILFSS…AAPKPLTVFA (66 aa)). Histidine 112, histidine 114, and histidine 129 together coordinate Cu cation. The cysteines at positions 123 and 212 are disulfide-linked. Zn(2+) is bound by residues histidine 129, histidine 137, histidine 146, and aspartate 149. Histidine 186 contacts Cu cation.

Belongs to the Cu-Zn superoxide dismutase family. Homotetramer. Requires Cu cation as cofactor. Zn(2+) is required as a cofactor.

It is found in the plastid. Its subcellular location is the chloroplast. The catalysed reaction is 2 superoxide + 2 H(+) = H2O2 + O2. Its function is as follows. Destroys radicals which are normally produced within the cells and which are toxic to biological systems. This Solidago canadensis var. scabra (Tall goldenrod) protein is Superoxide dismutase [Cu-Zn], chloroplastic (SODCP).